Reading from the N-terminus, the 148-residue chain is Large ribosomal subunit protein uL15 (148 aa).

The segment covering 1-10 has biased composition (basic and acidic residues); it reads MQLHNLEYKK. A disordered region spans residues 1–42; sequence MQLHNLEYKKGSRNHKEKRVGRGHGSGLGKTSGRGQDGQKAR. A compositionally biased stretch (basic residues) spans 11 to 22; it reads GSRNHKEKRVGR. Residues 23 to 36 are compositionally biased toward gly residues; sequence GHGSGLGKTSGRGQ.

The protein belongs to the universal ribosomal protein uL15 family. Part of the 50S ribosomal subunit.

Functionally, binds to the 23S rRNA. This Ureaplasma urealyticum serovar 10 (strain ATCC 33699 / Western) protein is Large ribosomal subunit protein uL15.